The primary structure comprises 284 residues: Avenin-like b10 (284 aa).

An N-terminal signal peptide occupies residues 1-18; sequence MKVFILALLALAATTAIA.

The protein belongs to the prolamin family. Post-translationally, contains disulfide bonds.

Its function is as follows. Seed storage protein. Might be integrated via inter-chain disulfide bonds within the glutenin polymer. This is Avenin-like b10 from Triticum aestivum (Wheat).